We begin with the raw amino-acid sequence, 454 residues long: uncharacterized protein (454 aa).

Residues 364-405 form the HNH domain; it reads CSRPGCDAPAYHSEVHHVTPWTTTHRTDINDLTLACGPDNRL.

Belongs to the Rv1128c/1148c/1588c/1702c/1945/3466 family.

This is an uncharacterized protein from Mycobacterium tuberculosis (strain ATCC 25618 / H37Rv).